The primary structure comprises 196 residues: Transmembrane 4 L6 family member 5 (196 aa).

Over 1–9 the chain is Cytoplasmic; the sequence is MCTGKCARF. Residues 10–30 traverse the membrane as a helical segment; that stretch reads VGLSLIPLSLVCIVANALLLV. Topologically, residues 31-45 are extracellular; it reads PNGQTTWTKDHLSLQ. The chain crosses the membrane as a helical span at residues 46-66; the sequence is VWLMAGFVGGGLMVLCPGISA. At 67–89 the chain is on the cytoplasmic side; it reads VRAGGKGCCGAGCCGNRCRMLRS. Residues 90-110 traverse the membrane as a helical segment; the sequence is VFCSAIGLLGAIYCLSVSGTG. Residues 90-196 are interaction with MTOR and CASTOR1; the sequence is VFCSAIGLLG…DCRKKQGSSQ (107 aa). The Extracellular portion of the chain corresponds to 111-156; the sequence is LRIGPQCLMNGSWDYHFQDTAGSYLLNRTQWNLCVEPPDVVLWNVT. N120 is a glycosylation site (N-linked (GlcNAc...) asparagine). An L-arginine-binding site is contributed by 123 to 128; the sequence is WDYHFQ. N-linked (GlcNAc...) asparagine glycans are attached at residues N137 and N154. Residues 157–177 traverse the membrane as a helical segment; the sequence is LFSLLVAASCLEILLCGVQLV. At 178-196 the chain is on the cytoplasmic side; that stretch reads NASIGVLCGDCRKKQGSSQ.

The protein belongs to the L6 tetraspanin family. In terms of assembly, interacts with MTOR; the interaction is positively regulated by arginine and is negatively regulated by leucine. Interacts with SLC38A9. Interacts with SLC7A1; the interaction is negatively regulated by arginine. Interacts with CASTOR1; the interaction is positively regulated by leucine and is negatively regulated by arginine.

Its subcellular location is the lysosome membrane. The protein localises to the cell membrane. In terms of biological role, acts as a lysosomal membrane arginine sensor. Forms a complex with MTOR and SLC38A9 on lysosomal membranes in an arginine-regulated manner, leading to arginine efflux which enables the activation of mTORC1 which subsequently leads to RPS6KB1 and EIF4EBP1 phosphorylations. Facilitates cell cycle G1/S phase progression and the translocation of the CDK4-CCND1 complex into the nucleus. CDKN1B and RHOA/ROCK signaling activity are involved in TM4SF5-mediated acceleration of G1/S phase progression. The sequence is that of Transmembrane 4 L6 family member 5 (TM4SF5) from Bos taurus (Bovine).